Consider the following 251-residue polypeptide: uncharacterized protein (251 aa).

A Response regulatory domain is found at 3 to 118 (KVVICDDERI…QLEHILDILV (116 aa)). A 4-aspartylphosphate modification is found at Asp55. Residues 152–249 (NQILSQIKQH…HMSPSDYNKL (98 aa)) enclose the HTH araC/xylS-type domain. DNA-binding regions (H-T-H motif) lie at residues 169–190 (LDLI…KEHV) and 216–239 (HYEI…KKYL).

Post-translationally, phosphorylated by SE_0166.

The protein resides in the cytoplasm. Probable member of the two-component regulatory system SE_0166/SE_0165. This is an uncharacterized protein from Staphylococcus epidermidis (strain ATCC 12228 / FDA PCI 1200).